A 77-amino-acid polypeptide reads, in one-letter code: Small ribosomal subunit protein bS21 (77 aa).

The interval 55-77 is disordered; it reads RKLARKRAQREGLMSNGRISALR.

It belongs to the bacterial ribosomal protein bS21 family.

In Bartonella quintana (strain Toulouse) (Rochalimaea quintana), this protein is Small ribosomal subunit protein bS21.